Reading from the N-terminus, the 208-residue chain is UPF0637 protein lp_2332 (208 aa).

This sequence belongs to the UPF0637 family.

This chain is UPF0637 protein lp_2332, found in Lactiplantibacillus plantarum (strain ATCC BAA-793 / NCIMB 8826 / WCFS1) (Lactobacillus plantarum).